Here is a 2521-residue protein sequence, read N- to C-terminus: Piezo-type mechanosensitive ion channel component 1 (2521 aa).

Topologically, residues 1 to 12 (MEPHVLGAVLYW) are cytoplasmic. A helical transmembrane segment spans residues 13-25 (LLLPCALLAACLL). Residues 26-28 (RFS) are Extracellular-facing. A helical transmembrane segment spans residues 29 to 44 (GLSLVYLLFLLLLPWF). Over 45-58 (PGPTRCGLQGHTGR) the chain is Cytoplasmic. A helical membrane pass occupies residues 59–81 (LLRALLGLSLLFLVAHLALQICL). The Extracellular segment spans residues 82-121 (HIVPRLDQLLGPSCSRWETLSRHIGVTRLDLKDIPNAIRL). Residues 122–138 (VAPDLGILVVSSVCLGI) traverse the membrane as a helical segment. The Cytoplasmic segment spans residues 139–194 (CGRLARNTRQSPHPRELDDDERDVDASPTAGLQEAATLAPTRRSRLAARFRVTAHW). Residues 195 to 214 (LLVAAGRVLAVTLLALAGIA) form a helical membrane-spanning segment. At 215–216 (HP) the chain is on the extracellular side. Residues 217-236 (SALSSVYLLLFLALCTWWAC) traverse the membrane as a helical segment. The Cytoplasmic portion of the chain corresponds to 237 to 247 (HFPISTRGFSR). A helical transmembrane segment spans residues 248-268 (LCVAVGCFGAGHLICLYCYQM). The Extracellular segment spans residues 269-309 (PLAQALLPPAGIWARVLGLKDFVGPTNCSSPHALVLNTGLD). N-linked (GlcNAc...) asparagine glycosylation is present at N295. A helical membrane pass occupies residues 310–330 (WPVYASPGVLLLLCYATASLR). Residues 331–417 (KLRAYRPSGQ…EASPLHSLGH (87 aa)) are Cytoplasmic-facing. The helical transmembrane segment at 418–438 (LIMDQSYVCALIAMMVWSITY) threads the bilayer. The Extracellular portion of the chain corresponds to 439–440 (HS). The helical transmembrane segment at 441-456 (WLTFVLLLWACLIWTV) threads the bilayer. Residues 457-461 (RSRHQ) lie on the Cytoplasmic side of the membrane. The chain crosses the membrane as a helical span at residues 462–484 (LAMLCSPCILLYGMTLCCLRYVW). Residues 485-512 (AMDLRPELPTTLGPVSLRQLGLEHTRYP) lie on the Extracellular side of the membrane. A helical transmembrane segment spans residues 513–530 (CLDLGAMLLYTLTFWLLL). The Cytoplasmic portion of the chain corresponds to 531–574 (RQFVKEKLLKWAESPAALTEVTVADTEPTRTQTLLQSLGELVKG). Residues 575-595 (VYAKYWIYVCAGMFIVVSFAG) form a helical membrane-spanning segment. Residue R596 is a topological domain, extracellular. Residues 597 to 617 (LVVYKIVYMFLFLLCLTLFQV) traverse the membrane as a helical segment. Residues 618–627 (YYSLWRKLLK) are Cytoplasmic-facing. Residues 628–649 (AFWWLVVAYTMLVLIAVYTFQF) form a helical membrane-spanning segment. The Extracellular segment spans residues 650-679 (QDFPAYWRNLTGFTDEQLGDLGLEQFSVSE). The chain crosses the membrane as a helical span at residues 680–696 (LFSSILVPGFFLLACIL). Topologically, residues 697 to 816 (QLHYFHRPFM…RRLLELHVFK (120 aa)) are cytoplasmic. The residue at position 734 (T734) is a Phosphothreonine. A disordered region spans residues 738 to 769 (REEQQEHQQQQQEEEEEEEDSRDEGLGVATPH). Positions 749 to 759 (QEEEEEEEDSR) are enriched in acidic residues. S758 bears the Phosphoserine mark. Residues 817–828 (LVALYTVWVALK) form a helical membrane-spanning segment. Residues 829-831 (EVS) lie on the Extracellular side of the membrane. A helical transmembrane segment spans residues 832-845 (VMNLLLVVLWAFAL). Over 846-859 (PYPRFRPMASCLST) the chain is Cytoplasmic. A helical membrane pass occupies residues 860–874 (VWTCVIIVCKMLYQL). The Extracellular portion of the chain corresponds to 875-926 (KVVNPQEYSSNCTEPFPNSTNLLPTEISQSLLYRGPVDPANWFGVRKGFPNL). A helical membrane pass occupies residues 927-954 (GYIQNHLQVLLLLVFEAIVYRRQEHYRR). The Cytoplasmic segment spans residues 955–994 (QHQLAPLPAQAVFASGTRQQLDQDLLGCLKYFINFFFYKF). A helical transmembrane segment spans residues 995 to 1010 (GLEICFLMAVNVIGQR). Over 1011–1012 (MN) the chain is Extracellular. The chain crosses the membrane as a helical span at residues 1013–1028 (FLVTLHGCWLVAILTR). At 1029–1041 (RHRQAIARLWPNY) the chain is on the cytoplasmic side. The helical transmembrane segment at 1042–1057 (CLFLALFLLYQYLLCL) threads the bilayer. Topologically, residues 1058 to 1096 (GMPPALCIDYPWRWSRAVPMNSALIKWLYLPDFFRAPNS) are extracellular. The chain crosses the membrane as a helical span at residues 1097-1118 (TNLISDFLLLLCASQQWQVFSA). At 1119-1153 (ERTEEWQRMAGVNTDRLEPLRGEPNPVPNFIHCRS) the chain is on the cytoplasmic side. A helical membrane pass occupies residues 1154–1180 (YLDMLKVAVFRYLFWLVLVVVFVTGAT). Residues 1181 to 1185 (RISIF) lie on the Extracellular side of the membrane. The chain crosses the membrane as a helical span at residues 1186-1204 (GLGYLLACFYLLLFGTALL). Residues 1205–1217 (QRDTRARLVLWDC) lie on the Cytoplasmic side of the membrane. A helical membrane pass occupies residues 1218–1236 (LILYNVTVIISKNMLSLLA). Residues 1237–1285 (CVFVEQMQTGFCWVIQLFSLVCTVKGYYDPKEMMDRDQDCLLPVEEAGI) lie on the Extracellular side of the membrane. Residues 1286 to 1302 (IWDSVCFFFLLLQRRVF) traverse the membrane as a helical segment. Over 1303–1656 (LSHYYLHVRA…ELLLDRRLRI (354 aa)) the chain is Cytoplasmic. Positions 1339 to 1368 (HRRIEEKSLAQLKRQMERIRAKQEKHRQGR) form a coiled coil. 3 disordered regions span residues 1356 to 1402 (RIRA…RRQW), 1462 to 1498 (RQQEQEQARQEQAGQLPTGGGPSQEVEPAEGPEEAAA), and 1576 to 1630 (TLPG…DPGE). Residues 1385-1398 (LEPGPDSPGGSSPP) are compositionally biased toward low complexity. Residues S1391 and S1396 each carry the phosphoserine modification. Residues S1636 and S1646 each carry the phosphoserine modification. A helical membrane pass occupies residues 1657–1700 (PELEEAELFAEGQGRALRLLRAVYQCVAAHSELLCYFIIILNHM). At 1701-1704 (VTAS) the chain is on the extracellular side. The helical transmembrane segment at 1705 to 1720 (AGSLVLPVLVFLWAML) threads the bilayer. At 1721–1728 (SIPRPSKR) the chain is on the cytoplasmic side. Residues 1729–1747 (FWMTAIVFTEIAVVVKYLF) form a helical membrane-spanning segment. Residues 1748–1779 (QFGFFPWNSHVVLRRYENKPYFPPRILGLEKT) are Extracellular-facing. A helical transmembrane segment spans residues 1780 to 1801 (DGYIKYDLVQLMALFFHRSQLL). Residues 1802–1960 (CYGLWDHEED…HTKYRAATDV (159 aa)) are Cytoplasmic-facing. Residues 1811 to 1822 (DSPSKEHDKSGE) show a composition bias toward basic and acidic residues. The segment at 1811 to 1921 (DSPSKEHDKS…RPSRSGGRVR (111 aa)) is disordered. The residue at position 1854 (T1854) is a Phosphothreonine. Residues 1859–1868 (VELRPRDTRR) show a composition bias toward basic and acidic residues. Basic residues predominate over residues 1869–1878 (ISLRFRRRKK). The span at 1890–1903 (EAEDREEEEGEEEK) shows a compositional bias: acidic residues. Residues 1904–1913 (EAPTGREKRP) are compositionally biased toward basic and acidic residues. A helical membrane pass occupies residues 1961-1980 (YALMFLADVVDFIIIIFGFW). Residues 1981–2000 (AFGKHSAATDITSSLSDDQV) are Extracellular-facing. Residues 2001-2017 (PEAFLVMLLIQFSTMVV) form a helical membrane-spanning segment. The Cytoplasmic segment spans residues 2018-2031 (DRALYLRKTVLGKL). Residues 2032–2052 (AFQVALVLAIHLWMFFILPAV) traverse the membrane as a helical segment. Residues 2053–2060 (TERMFNQN) lie on the Extracellular side of the membrane. Residues 2061-2076 (VVAQLWYFVKCIYFAL) traverse the membrane as a helical segment. At 2077 to 2176 (SAYQIRCGYP…KKKIVKYGMG (100 aa)) the chain is on the cytoplasmic side. Residues 2177 to 2197 (GLIILFLIAIIWFPLLFMSLV) traverse the membrane as a helical segment. Topologically, residues 2198–2431 (RSVVGVVNQP…IFSDKVSPPS (234 aa)) are extracellular. A glycan (N-linked (GlcNAc...) asparagine) is linked at N2294. A disulfide bond links C2411 and C2415. The helical transmembrane segment at 2432 to 2452 (LGFLAGYGIMGLYVSIVLVIG) threads the bilayer. At 2453 to 2521 (KFVRGFFSEI…TMIKWTREKE (69 aa)) the chain is on the cytoplasmic side.

It belongs to the PIEZO (TC 1.A.75) family. As to quaternary structure, homotrimer; the homotrimer forms a propeller-shaped Piezo channel with a cation-ion conducting pore. Heterotrimeric interaction may occur between PIEZO1 and PIEZO2. Interacts with PKD2. Interacts with STOML3. Interacts with TMC1, TMC2, PCDH15 and CIB2; the interaction may be part of the MET complex. Interacts with MDFIC (via C-terminus); the interaction prolongs Piezo channel inactivation. Interacts with MDFI (via C-terminus); the interaction prolongs Piezo channel inactivation. Expressed in numerous tissues. In normal brain, expressed exclusively in neurons, not in astrocytes. In Alzheimer disease brains, expressed in about half of the activated astrocytes located around classical senile plaques. In Parkinson disease substantia nigra, not detected in melanin-containing neurons nor in activated astrocytes. Expressed in erythrocytes (at protein level). Expressed in myoblasts (at protein level).

It is found in the endoplasmic reticulum membrane. The protein resides in the endoplasmic reticulum-Golgi intermediate compartment membrane. It localises to the cell membrane. Its subcellular location is the cell projection. The protein localises to the lamellipodium membrane. It catalyses the reaction K(+)(in) = K(+)(out). The catalysed reaction is Na(+)(in) = Na(+)(out). It carries out the reaction Ca(2+)(in) = Ca(2+)(out). The enzyme catalyses Mg(2+)(in) = Mg(2+)(out). Regulated by auxillary subunits MDFIC and MDFI. Down-regulated by phosphatidylserines exposed on the cell surface. Divalent ions decrease the single-channel permeability of K(+). Functionally, pore-forming subunit of the mechanosensitive non-specific cation Piezo channel required for rapidly adapting mechanically activated (MA) currents and has a key role in sensing touch and tactile pain. Piezo channels are homotrimeric three-blade propeller-shaped structures that utilize a cap-motion and plug-and-latch mechanism to gate their ion-conducting pathways. Generates currents characterized by a linear current-voltage relationship that are sensitive to ruthenium red and gadolinium. Conductance to monovalent alkali ions is highest for K(+), intermediate for Na(+) and lowest for Li(+). Divalent ions except for Mn(2+) permeate the channel but more slowly than the monovalent ions and they also reduce K(+) currents. Plays a key role in epithelial cell adhesion by maintaining integrin activation through R-Ras recruitment to the ER, most probably in its activated state, and subsequent stimulation of calpain signaling. In inner ear hair cells, PIEZO1/2 subunits may constitute part of the mechanotransducer (MET) non-selective cation channel complex where they may act as pore-forming ion-conducting component in the complex. In the kidney, may contribute to the detection of intraluminal pressure changes and to urine flow sensing. Acts as a shear-stress sensor that promotes endothelial cell organization and alignment in the direction of blood flow through calpain activation. Plays a key role in blood vessel formation and vascular structure in both development and adult physiology. Acts as a sensor of phosphatidylserine (PS) flipping at the plasma membrane and governs morphogenesis of muscle cells. In myoblasts, flippase-mediated PS enrichment at the inner leaflet of plasma membrane triggers channel activation and Ca2+ influx followed by Rho GTPases signal transduction, leading to assembly of cortical actomyosin fibers and myotube formation. In Homo sapiens (Human), this protein is Piezo-type mechanosensitive ion channel component 1.